Consider the following 724-residue polypeptide: Probable serine/threonine-protein kinase KKQ8 (724 aa).

Disordered regions lie at residues 1–81 (MVMQ…RQRS) and 93–188 (HPFR…KDIL). Residue Ser-19 is modified to Phosphoserine. Residues 45 to 54 (PYRSSSTSPK) show a composition bias toward low complexity. A compositionally biased stretch (polar residues) spans 95–106 (FRQTGSGASNSP). Residues 143 to 162 (RSSSVSSCDSSNGTTSSSDS) show a composition bias toward low complexity. Ser-232, Ser-238, and Ser-241 each carry phosphoserine. Residues 329-355 (SQTNHEKRTGQSPNDSNRSSPTQGRED) form a disordered region. Residues 338–351 (GQSPNDSNRSSPTQ) show a composition bias toward polar residues. Residues 412–712 (GHPVGLVGAG…VGKLLDMQWM (301 aa)) enclose the Protein kinase domain. Residues 418 to 426 (VGAGAYGEV) and Lys-455 each bind ATP. Residue Asp-563 is the Proton acceptor of the active site.

This sequence belongs to the protein kinase superfamily. CAMK Ser/Thr protein kinase family. NPR/HAL subfamily. HAL5 sub-subfamily.

Its subcellular location is the cytoplasm. It carries out the reaction L-seryl-[protein] + ATP = O-phospho-L-seryl-[protein] + ADP + H(+). The catalysed reaction is L-threonyl-[protein] + ATP = O-phospho-L-threonyl-[protein] + ADP + H(+). In Saccharomyces cerevisiae (strain ATCC 204508 / S288c) (Baker's yeast), this protein is Probable serine/threonine-protein kinase KKQ8 (KKQ8).